The following is a 1423-amino-acid chain: DNA-directed RNA polymerase subunit beta' (1423 aa).

4 residues coordinate Zn(2+): Cys71, Cys73, Cys86, and Cys89. Mg(2+)-binding residues include Asp461, Asp463, and Asp465. The Zn(2+) site is built by Cys815, Cys889, Cys896, and Cys899.

Belongs to the RNA polymerase beta' chain family. As to quaternary structure, the RNAP catalytic core consists of 2 alpha, 1 beta, 1 beta' and 1 omega subunit. When a sigma factor is associated with the core the holoenzyme is formed, which can initiate transcription. Requires Mg(2+) as cofactor. The cofactor is Zn(2+).

It carries out the reaction RNA(n) + a ribonucleoside 5'-triphosphate = RNA(n+1) + diphosphate. DNA-dependent RNA polymerase catalyzes the transcription of DNA into RNA using the four ribonucleoside triphosphates as substrates. The chain is DNA-directed RNA polymerase subunit beta' from Actinobacillus pleuropneumoniae serotype 7 (strain AP76).